Consider the following 331-residue polypeptide: D-lactate/D-glycerate dehydrogenase (331 aa).

NAD(+)-binding positions include 154-155 (RI), D174, 205-206 (VP), N211, 232-234 (FAR), and D258. The active site involves R234. The active site involves E263. H295 acts as the Proton donor in catalysis.

Belongs to the D-isomer specific 2-hydroxyacid dehydrogenase family. In terms of assembly, homodimer.

It carries out the reaction (R)-lactate + NAD(+) = pyruvate + NADH + H(+). The enzyme catalyses (R)-glycerate + NAD(+) = 3-hydroxypyruvate + NADH + H(+). Functionally, has both D-lactate and D-glycerate dehydrogenase activities. Equally active on pyruvate and hydroxypyruvate. The sequence is that of D-lactate/D-glycerate dehydrogenase from Pediococcus acidilactici.